Reading from the N-terminus, the 138-residue chain is ATP synthase epsilon chain (138 aa).

It belongs to the ATPase epsilon chain family. As to quaternary structure, F-type ATPases have 2 components, CF(1) - the catalytic core - and CF(0) - the membrane proton channel. CF(1) has five subunits: alpha(3), beta(3), gamma(1), delta(1), epsilon(1). CF(0) has three main subunits: a, b and c.

The protein resides in the cell inner membrane. In terms of biological role, produces ATP from ADP in the presence of a proton gradient across the membrane. The polypeptide is ATP synthase epsilon chain (Delftia acidovorans (strain DSM 14801 / SPH-1)).